The following is a 500-amino-acid chain: Probable malate:quinone oxidoreductase (500 aa).

Belongs to the MQO family. It depends on FAD as a cofactor.

The catalysed reaction is (S)-malate + a quinone = a quinol + oxaloacetate. The protein operates within carbohydrate metabolism; tricarboxylic acid cycle; oxaloacetate from (S)-malate (quinone route): step 1/1. The protein is Probable malate:quinone oxidoreductase of Bacillus thuringiensis (strain Al Hakam).